A 369-amino-acid chain; its full sequence is MSTAAPILLTPGPLTTSARTRQAMMVDWGSWDDRFNQLTASLCEQLLAILNGADSHHCVPLQGSGTFAVEAAIGTLVPRDGKVLVLINGAYGKRLAKICEVLGRSFSTFETAEDEPTTAADVDRLLCADSDITHVALIHCETSTGILNPLPEIAQVVEQHGKRLIIDAMSSFGALPVDAQKVPFDALIAASGKCLEGVPGMGFVFARKESLAAAAGNSHSLAMDLFDQHSYMKKTGQWRFTPPTHVVAALHEALLQYNEEGGLPARHARYAANCQALMEEMGKLGLRSFLPAAIQAPIIATFHAPKDPRYQFKDFYERVKAKGYILYPGKLTQVETFRVGCIGHVTPAQMREAVAAVSEVLREMEVLDI.

Residue K193 is modified to N6-(pyridoxal phosphate)lysine.

The protein belongs to the class-V pyridoxal-phosphate-dependent aminotransferase family. PhnW subfamily. Homodimer. It depends on pyridoxal 5'-phosphate as a cofactor.

The enzyme catalyses (2-aminoethyl)phosphonate + pyruvate = phosphonoacetaldehyde + L-alanine. Involved in phosphonate degradation. The polypeptide is 2-aminoethylphosphonate--pyruvate transaminase (Pseudomonas fluorescens (strain Pf0-1)).